Here is a 259-residue protein sequence, read N- to C-terminus: Small ribosomal subunit protein eS4 (259 aa).

The S4 RNA-binding domain maps to 41–105; it reads LPLSVLLKER…TDQSFRILYD (65 aa). Phosphothreonine is present on T248. A Phosphoserine modification is found at S258.

Belongs to the eukaryotic ribosomal protein eS4 family.

The chain is Small ribosomal subunit protein eS4 from Tetrahymena thermophila.